Consider the following 84-residue polypeptide: MKQEIKKDDISGLSFEEALKQLEVIVENLERGDVPLEQSIDIYERGEALKNHCDKLLKVAEAKIEKIQLSNNGTPEGVKPLDPE.

Belongs to the XseB family. As to quaternary structure, heterooligomer composed of large and small subunits.

It localises to the cytoplasm. It catalyses the reaction Exonucleolytic cleavage in either 5'- to 3'- or 3'- to 5'-direction to yield nucleoside 5'-phosphates.. In terms of biological role, bidirectionally degrades single-stranded DNA into large acid-insoluble oligonucleotides, which are then degraded further into small acid-soluble oligonucleotides. The sequence is that of Exodeoxyribonuclease 7 small subunit from Bartonella bacilliformis (strain ATCC 35685 / KC583 / Herrer 020/F12,63).